A 391-amino-acid polypeptide reads, in one-letter code: Ferrochelatase (391 aa).

Residues histidine 196 and glutamate 281 each coordinate Fe cation.

Belongs to the ferrochelatase family.

The protein resides in the cytoplasm. It catalyses the reaction heme b + 2 H(+) = protoporphyrin IX + Fe(2+). The protein operates within porphyrin-containing compound metabolism; protoheme biosynthesis; protoheme from protoporphyrin-IX: step 1/1. Catalyzes the ferrous insertion into protoporphyrin IX. The protein is Ferrochelatase of Synechococcus sp. (strain WH7803).